Consider the following 313-residue polypeptide: Probable myosin light chain kinase DDB_G0292624 (313 aa).

The Protein kinase domain maps to 6–264; the sequence is YELHKEIGKG…AKQALEHPWI (259 aa). ATP-binding positions include 12–20 and K35; that span reads IGKGAFSVV. D125 functions as the Proton acceptor in the catalytic mechanism.

Belongs to the protein kinase superfamily. CAMK Ser/Thr protein kinase family. CaMK subfamily.

It carries out the reaction L-seryl-[myosin light chain] + ATP = O-phospho-L-seryl-[myosin light chain] + ADP + H(+). It catalyses the reaction L-threonyl-[myosin light chain] + ATP = O-phospho-L-threonyl-[myosin light chain] + ADP + H(+). Its activity is regulated as follows. Does not have a calmodulin-binding domain. Functionally, may phosphorylate a specific serine in the N-terminus of a myosin light chain. The protein is Probable myosin light chain kinase DDB_G0292624 of Dictyostelium discoideum (Social amoeba).